Consider the following 91-residue polypeptide: Acylphosphatase (91 aa).

One can recognise an Acylphosphatase-like domain in the interval 3–91 (HIKVNVKGQV…TELTKFEVKY (89 aa)). Catalysis depends on residues R18 and N36.

This sequence belongs to the acylphosphatase family.

The enzyme catalyses an acyl phosphate + H2O = a carboxylate + phosphate + H(+). This is Acylphosphatase (acyP) from Oceanobacillus iheyensis (strain DSM 14371 / CIP 107618 / JCM 11309 / KCTC 3954 / HTE831).